The sequence spans 198 residues: MYEYIKGKYIGINKDYVIVENSGIGYKIFTSGATMSSMPKNGEEIMLYLEQIVREDFIGLYGFDSKEELEMFKLLLTVSGVGPKAALSLLSISRVNNLKYAIMIGDEKHICRGVGIGKKTAARIILEIKDKLKPDELVDSSLEIDTKDNENVMALSEALSALIALGYSEKEAESVLKKIDKNDSVENIIKNALKALMG.

Residues 1–64 (MYEYIKGKYI…EDFIGLYGFD (64 aa)) form a domain I region. The interval 65-143 (SKEELEMFKL…PDELVDSSLE (79 aa)) is domain II. Residues 144–149 (IDTKDN) are flexible linker. The interval 150–198 (ENVMALSEALSALIALGYSEKEAESVLKKIDKNDSVENIIKNALKALMG) is domain III.

Belongs to the RuvA family. In terms of assembly, homotetramer. Forms an RuvA(8)-RuvB(12)-Holliday junction (HJ) complex. HJ DNA is sandwiched between 2 RuvA tetramers; dsDNA enters through RuvA and exits via RuvB. An RuvB hexamer assembles on each DNA strand where it exits the tetramer. Each RuvB hexamer is contacted by two RuvA subunits (via domain III) on 2 adjacent RuvB subunits; this complex drives branch migration. In the full resolvosome a probable DNA-RuvA(4)-RuvB(12)-RuvC(2) complex forms which resolves the HJ.

The protein localises to the cytoplasm. In terms of biological role, the RuvA-RuvB-RuvC complex processes Holliday junction (HJ) DNA during genetic recombination and DNA repair, while the RuvA-RuvB complex plays an important role in the rescue of blocked DNA replication forks via replication fork reversal (RFR). RuvA specifically binds to HJ cruciform DNA, conferring on it an open structure. The RuvB hexamer acts as an ATP-dependent pump, pulling dsDNA into and through the RuvAB complex. HJ branch migration allows RuvC to scan DNA until it finds its consensus sequence, where it cleaves and resolves the cruciform DNA. The sequence is that of Holliday junction branch migration complex subunit RuvA from Clostridium beijerinckii (strain ATCC 51743 / NCIMB 8052) (Clostridium acetobutylicum).